The chain runs to 341 residues: Heat-inducible transcription repressor HrcA (341 aa).

The protein belongs to the HrcA family.

Its function is as follows. Negative regulator of class I heat shock genes (grpE-dnaK-dnaJ and groELS operons). Prevents heat-shock induction of these operons. In Corynebacterium glutamicum (strain ATCC 13032 / DSM 20300 / JCM 1318 / BCRC 11384 / CCUG 27702 / LMG 3730 / NBRC 12168 / NCIMB 10025 / NRRL B-2784 / 534), this protein is Heat-inducible transcription repressor HrcA.